We begin with the raw amino-acid sequence, 375 residues long: DNA replication and repair protein RecF (375 aa).

An ATP-binding site is contributed by 30–37; it reads GENAQGKT.

This sequence belongs to the RecF family.

Its subcellular location is the cytoplasm. The RecF protein is involved in DNA metabolism; it is required for DNA replication and normal SOS inducibility. RecF binds preferentially to single-stranded, linear DNA. It also seems to bind ATP. The protein is DNA replication and repair protein RecF of Bacillus anthracis (strain A0248).